Consider the following 205-residue polypeptide: Thymidine kinase (205 aa).

ATP is bound by residues 9–16 and 87–90; these read SAMNAGKS and DECQ. The Proton acceptor role is filled by Glu-88. Residues Cys-145, Cys-147, Cys-182, and His-185 each contribute to the Zn(2+) site.

This sequence belongs to the thymidine kinase family. Homotetramer.

The protein localises to the cytoplasm. The enzyme catalyses thymidine + ATP = dTMP + ADP + H(+). In Shigella dysenteriae serotype 1 (strain Sd197), this protein is Thymidine kinase.